The primary structure comprises 366 residues: Homeobox-leucine zipper protein HOX21 (366 aa).

Disordered stretches follow at residues 25-81 and 94-132; these read QQAA…SSAQ and MLGKRPMSYGDGGGGGDEVNGGGEDELSDDGSQAGEKKR. A compositionally biased stretch (basic residues) spans 36–48; the sequence is HHHHHHHGHHGHH. Positions 62–74 are enriched in pro residues; that stretch reads GPPPPPPPHPHNP. Over residues 103–115 the composition is skewed to gly residues; the sequence is GDGGGGGDEVNGG. The segment at residues 127-186 is a DNA-binding region (homeobox); the sequence is AGEKKRRLNVEQVRTLEKNFELGNKLEPERKMQLARALGLQPRQVAIWFQNRRARWKTKQ. Residues 185–229 form a leucine-zipper region; sequence KQLEKDYDALKRQLDAVKAENDALLNHNKKLQAEIVALKGREAAS. Disordered stretches follow at residues 239–287 and 312–336; these read EASC…GGGG and LHSSSGGAGGPKMEHHGGGGNVQAA. A compositionally biased stretch (polar residues) spans 240-252; sequence ASCSNRSENSSEI.

The protein belongs to the HD-ZIP homeobox family. Class I subfamily. As to expression, expressed in seedlings, roots, stems, leaf blades and panicles.

Its subcellular location is the nucleus. Functionally, probable transcription factor. This Oryza sativa subsp. japonica (Rice) protein is Homeobox-leucine zipper protein HOX21 (HOX21).